The primary structure comprises 461 residues: Cysteine--tRNA ligase (461 aa).

A Zn(2+)-binding site is contributed by cysteine 28. A 'HIGH' region motif is present at residues valine 30–histidine 40. Residues cysteine 209, histidine 234, and glutamate 238 each coordinate Zn(2+). Residues lysine 266 to serine 270 carry the 'KMSKS' region motif. An ATP-binding site is contributed by lysine 269.

Belongs to the class-I aminoacyl-tRNA synthetase family. As to quaternary structure, monomer. The cofactor is Zn(2+).

It localises to the cytoplasm. The enzyme catalyses tRNA(Cys) + L-cysteine + ATP = L-cysteinyl-tRNA(Cys) + AMP + diphosphate. This chain is Cysteine--tRNA ligase, found in Vibrio atlanticus (strain LGP32) (Vibrio splendidus (strain Mel32)).